A 392-amino-acid polypeptide reads, in one-letter code: Galactokinase (392 aa).

A substrate-binding site is contributed by 37-40; the sequence is EHTD. Residues Ser-71 and 128–134 contribute to the ATP site; that span reads GAGLSSS. Mg(2+) is bound by residues Ser-134 and Glu-166. The Proton acceptor role is filled by Asp-178. Tyr-228 is a binding site for substrate.

This sequence belongs to the GHMP kinase family. GalK subfamily.

It is found in the cytoplasm. It catalyses the reaction alpha-D-galactose + ATP = alpha-D-galactose 1-phosphate + ADP + H(+). It functions in the pathway carbohydrate metabolism; galactose metabolism. Functionally, catalyzes the transfer of the gamma-phosphate of ATP to D-galactose to form alpha-D-galactose-1-phosphate (Gal-1-P). The sequence is that of Galactokinase from Streptococcus pneumoniae serotype 4 (strain ATCC BAA-334 / TIGR4).